The primary structure comprises 79 residues: D-alanyl carrier protein (79 aa).

Residues 1-77 (MDIKAEVIEI…KIVEGVTELR (77 aa)) enclose the Carrier domain. S35 is modified (O-(pantetheine 4'-phosphoryl)serine).

The protein belongs to the DltC family. In terms of processing, 4'-phosphopantetheine is transferred from CoA to a specific serine of apo-DCP.

It localises to the cytoplasm. It functions in the pathway cell wall biogenesis; lipoteichoic acid biosynthesis. In terms of biological role, carrier protein involved in the D-alanylation of lipoteichoic acid (LTA). The loading of thioester-linked D-alanine onto DltC is catalyzed by D-alanine--D-alanyl carrier protein ligase DltA. The DltC-carried D-alanyl group is further transferred to cell membrane phosphatidylglycerol (PG) by forming an ester bond, probably catalyzed by DltD. D-alanylation of LTA plays an important role in modulating the properties of the cell wall in Gram-positive bacteria, influencing the net charge of the cell wall. The protein is D-alanyl carrier protein of Streptococcus sanguinis (strain SK36).